The primary structure comprises 1041 residues: Histone deacetylase complex subunit SAP130-B (1041 aa).

Disordered regions lie at residues 1–62, 111–131, 572–592, 614–769, and 806–852; these read MSSQ…QEPV, KSTM…SAVP, TNQG…EPKS, TPAG…PSGA, and VLAN…DEER. A compositionally biased stretch (polar residues) spans 18-30; that stretch reads VSNSGASVGQNVQ. Over residues 33–42 the composition is skewed to basic and acidic residues; sequence EVAREIDVQS. A compositionally biased stretch (low complexity) spans 576–592; the sequence is VQTSSVSSQQASSEPKS. Over residues 614–641 the composition is skewed to polar residues; it reads TPAGTTVMQSHSQSPGIGSSPAQGSSPR. The segment covering 707 to 728 has biased composition (low complexity); sequence PGAADQPSAAASLPSSHHPTAA.

This sequence belongs to the SAP130 family.

The protein resides in the nucleus. In terms of biological role, acts as a transcriptional repressor. The protein is Histone deacetylase complex subunit SAP130-B (sap130-b) of Xenopus laevis (African clawed frog).